A 1293-amino-acid chain; its full sequence is Phosphoribosylformylglycinamidine synthase (1293 aa).

Residues 305–316 (GAATGSGGEIRD) and A676 each bind ATP. Positions 677, 716, 720, and 884 each coordinate Mg(2+). S886 contacts ATP. Positions 1040-1293 (MAILREQGVN…MFRNARVKLG (254 aa)) constitute a Glutamine amidotransferase type-1 domain. C1133 functions as the Nucleophile in the catalytic mechanism. Residues H1258 and E1260 contribute to the active site.

It in the N-terminal section; belongs to the FGAMS family. In terms of assembly, monomer.

It localises to the cytoplasm. The catalysed reaction is N(2)-formyl-N(1)-(5-phospho-beta-D-ribosyl)glycinamide + L-glutamine + ATP + H2O = 2-formamido-N(1)-(5-O-phospho-beta-D-ribosyl)acetamidine + L-glutamate + ADP + phosphate + H(+). It participates in purine metabolism; IMP biosynthesis via de novo pathway; 5-amino-1-(5-phospho-D-ribosyl)imidazole from N(2)-formyl-N(1)-(5-phospho-D-ribosyl)glycinamide: step 1/2. Phosphoribosylformylglycinamidine synthase involved in the purines biosynthetic pathway. Catalyzes the ATP-dependent conversion of formylglycinamide ribonucleotide (FGAR) and glutamine to yield formylglycinamidine ribonucleotide (FGAM) and glutamate. This chain is Phosphoribosylformylglycinamidine synthase, found in Shewanella denitrificans (strain OS217 / ATCC BAA-1090 / DSM 15013).